Here is a 201-residue protein sequence, read N- to C-terminus: CASP-like protein 1F2 (201 aa).

Residues 1 to 29 (MITSIATTTAGAFEVKSLGFIPYPSQPKR) are Cytoplasmic-facing. The chain crosses the membrane as a helical span at residues 30–50 (IFFMAQVIFRILAIAFAVASI). Over 51-78 (SAMVTSDQNVIVFGMDTAARYSYSSAFR) the chain is Extracellular. A helical transmembrane segment spans residues 79–99 (FLVGANAVVCGFSVLSLIFVC). At 100–119 (LMSRRSEAILEKNYYLFLHD) the chain is on the cytoplasmic side. The chain crosses the membrane as a helical span at residues 120 to 140 (MVMMVMMVSGCSAATAIGYVG). Topologically, residues 141-162 (RYGEKEITWTAVCDFVGKFCNQ) are extracellular. A helical membrane pass occupies residues 163 to 183 (ALVSIVLAYLALFCYVALTTL). Residues 184–201 (AAHKLNHSSSTAAIRQNE) are Cytoplasmic-facing.

It belongs to the Casparian strip membrane proteins (CASP) family. As to quaternary structure, homodimer and heterodimers.

It is found in the cell membrane. This chain is CASP-like protein 1F2, found in Ricinus communis (Castor bean).